Reading from the N-terminus, the 187-residue chain is Accessory gene regulator protein B (187 aa).

5 helical membrane-spanning segments follow: residues 49 to 69, 82 to 102, 106 to 126, 144 to 164, and 166 to 186; these read ISIF…YMLI, ILCY…LINI, FTYL…YAPA, LSII…PFYA, and FMLL…FPKE.

The protein belongs to the AgrB family.

The protein localises to the cell membrane. Functionally, essential for the production of a quorum sensing system signal molecule, the autoinducing peptide (AIP). This quorum sensing system is responsible for the regulation of the expression of virulence factor genes. Involved in the proteolytic processing of AgrD, the precursor of AIP. The chain is Accessory gene regulator protein B from Staphylococcus aureus (strain Mu50 / ATCC 700699).